The following is a 367-amino-acid chain: Peptide chain release factor 2 (367 aa).

The residue at position 249 (Gln-249) is an N5-methylglutamine.

The protein belongs to the prokaryotic/mitochondrial release factor family. Post-translationally, methylated by PrmC. Methylation increases the termination efficiency of RF2.

It localises to the cytoplasm. Its function is as follows. Peptide chain release factor 2 directs the termination of translation in response to the peptide chain termination codons UGA and UAA. This chain is Peptide chain release factor 2, found in Thermotoga sp. (strain RQ2).